The primary structure comprises 202 residues: MVPQGCSLVWVSALYVSVIASLHIINNENSVFIATHSETELRHWLIFVKMAQRNGTAWWRMASVPINAYFERDIAFLFNPRCVIETAMGSKILCRYNKNIGVVFVDNDTKCNVSFPSGVQLQLLNQSVMESIRTKTYVVDYARKTTERGDCFISVAFCRKERRRFLSRCERFVYYCISVYLFAVVVLCSCWFALDPLFNMWA.

Positions 1–20 (MVPQGCSLVWVSALYVSVIA) are cleaved as a signal peptide. Residues Asn54, Asn107, Asn112, and Asn125 are each glycosylated (N-linked (GlcNAc...) asparagine; by host). A helical membrane pass occupies residues 172 to 192 (FVYYCISVYLFAVVVLCSCWF).

It localises to the membrane. The sequence is that of Glycoprotein U22 (U22) from Homo sapiens (Human).